The primary structure comprises 423 residues: Serine--tRNA ligase (423 aa).

Residue 231 to 233 (TAE) coordinates L-serine. 262–264 (RSE) provides a ligand contact to ATP. Residue E285 participates in L-serine binding. 349-352 (EISS) serves as a coordination point for ATP. Position 384 (S384) interacts with L-serine.

It belongs to the class-II aminoacyl-tRNA synthetase family. Type-1 seryl-tRNA synthetase subfamily. As to quaternary structure, homodimer. The tRNA molecule binds across the dimer.

It is found in the cytoplasm. The catalysed reaction is tRNA(Ser) + L-serine + ATP = L-seryl-tRNA(Ser) + AMP + diphosphate + H(+). The enzyme catalyses tRNA(Sec) + L-serine + ATP = L-seryl-tRNA(Sec) + AMP + diphosphate + H(+). Its pathway is aminoacyl-tRNA biosynthesis; selenocysteinyl-tRNA(Sec) biosynthesis; L-seryl-tRNA(Sec) from L-serine and tRNA(Sec): step 1/1. Functionally, catalyzes the attachment of serine to tRNA(Ser). Is also able to aminoacylate tRNA(Sec) with serine, to form the misacylated tRNA L-seryl-tRNA(Sec), which will be further converted into selenocysteinyl-tRNA(Sec). This Acinetobacter baumannii (strain AB307-0294) protein is Serine--tRNA ligase.